The sequence spans 217 residues: tRNA (guanine-N(7)-)-methyltransferase (217 aa).

Residues glutamate 44, glutamate 69, asparagine 96, and aspartate 118 each coordinate S-adenosyl-L-methionine. The active site involves aspartate 118. Lysine 122 is a substrate binding site. The segment at 124–129 is interaction with RNA; it reads RHEKRR. Substrate contacts are provided by residues aspartate 154 and 191 to 194; that span reads TEYE.

The protein belongs to the class I-like SAM-binding methyltransferase superfamily. TrmB family.

It catalyses the reaction guanosine(46) in tRNA + S-adenosyl-L-methionine = N(7)-methylguanosine(46) in tRNA + S-adenosyl-L-homocysteine. The protein operates within tRNA modification; N(7)-methylguanine-tRNA biosynthesis. Functionally, catalyzes the formation of N(7)-methylguanine at position 46 (m7G46) in tRNA. The protein is tRNA (guanine-N(7)-)-methyltransferase of Geobacillus kaustophilus (strain HTA426).